A 215-amino-acid polypeptide reads, in one-letter code: 7-methyl-GTP pyrophosphatase (215 aa).

The Proton acceptor role is filled by D79.

The protein belongs to the Maf family. YceF subfamily. It depends on a divalent metal cation as a cofactor.

It is found in the cytoplasm. The enzyme catalyses N(7)-methyl-GTP + H2O = N(7)-methyl-GMP + diphosphate + H(+). Nucleoside triphosphate pyrophosphatase that hydrolyzes 7-methyl-GTP (m(7)GTP). May have a dual role in cell division arrest and in preventing the incorporation of modified nucleotides into cellular nucleic acids. The chain is 7-methyl-GTP pyrophosphatase from Burkholderia mallei (strain ATCC 23344).